We begin with the raw amino-acid sequence, 295 residues long: 33 kDa chaperonin (295 aa).

2 disulfide bridges follow: C237/C239 and C270/C273.

Belongs to the HSP33 family. Under oxidizing conditions two disulfide bonds are formed involving the reactive cysteines. Under reducing conditions zinc is bound to the reactive cysteines and the protein is inactive.

The protein localises to the cytoplasm. Its function is as follows. Redox regulated molecular chaperone. Protects both thermally unfolding and oxidatively damaged proteins from irreversible aggregation. Plays an important role in the bacterial defense system toward oxidative stress. The polypeptide is 33 kDa chaperonin (Shouchella clausii (strain KSM-K16) (Alkalihalobacillus clausii)).